A 243-amino-acid polypeptide reads, in one-letter code: DNA repair protein RecO (243 aa).

Belongs to the RecO family.

In terms of biological role, involved in DNA repair and RecF pathway recombination. This Vibrio vulnificus (strain CMCP6) protein is DNA repair protein RecO.